Here is a 455-residue protein sequence, read N- to C-terminus: Kynurenine 3-monooxygenase (455 aa).

The protein belongs to the aromatic-ring hydroxylase family. KMO subfamily. FAD serves as cofactor.

The catalysed reaction is L-kynurenine + NADPH + O2 + H(+) = 3-hydroxy-L-kynurenine + NADP(+) + H2O. It participates in cofactor biosynthesis; NAD(+) biosynthesis; quinolinate from L-kynurenine: step 1/3. In terms of biological role, catalyzes the hydroxylation of L-kynurenine (L-Kyn) to form 3-hydroxy-L-kynurenine (L-3OHKyn). Required for synthesis of quinolinic acid. This chain is Kynurenine 3-monooxygenase, found in Stenotrophomonas maltophilia (strain K279a).